The following is a 790-amino-acid chain: Probable copper-transporting ATPase SynA (790 aa).

At 1-105 (MPAAIVHSAD…IPPLQQQRLQ (105 aa)) the chain is on the cytoplasmic side. The HMA domain maps to 14 to 81 (TSILVEVEGM…EITGLGFRAQ (68 aa)). Cys25 and Cys28 together coordinate Cu cation. The helical transmembrane segment at 106-125 (LAIAAFLLIVSSWGHLGHWL) threads the bilayer. Residues 126–134 (DHPLPGTDQ) are Extracellular-facing. Residues 135-154 (LWFHALLAIWALLGPGRSIL) form a helical membrane-spanning segment. Topologically, residues 155–166 (QAGWQGLRCGAP) are cytoplasmic. The helical transmembrane segment at 167–189 (NMNSLVLLGTGSAYLASLVALLW) threads the bilayer. Residues 190–193 (PQLG) are Extracellular-facing. The chain crosses the membrane as a helical span at residues 194 to 211 (WVCFLDEPVMLLGFILLG). Over 212–357 (RTLEEQARFR…RKAPVQRFAD (146 aa)) the chain is Cytoplasmic. The chain crosses the membrane as a helical span at residues 358 to 380 (AIAGRFVYGVCAIAALTFGFWAT). Residues 381–416 (LGSRWWPQVLQQPLPGLLIHAPHHGMEMAHPHSHSP) are Extracellular-facing. A helical transmembrane segment spans residues 417–439 (LLLALTLAISVLVVACPCALGLA). The Cytoplasmic portion of the chain corresponds to 440–726 (TPTAILVATG…QMGLRTIRQN (287 aa)). The 4-aspartylphosphate intermediate role is filled by Asp476. Residues Asp669 and Asp673 each contribute to the Mg(2+) site. Residues 727-749 (LTWALGYNVVMLPLAAGAFLPAY) traverse the membrane as a helical segment. At 750-753 (GLAL) the chain is on the extracellular side. The helical transmembrane segment at 754–776 (TPAIAGACMAVSSLAVVSNSLLL) threads the bilayer. The Cytoplasmic segment spans residues 777-790 (RYWFRRSLNHSVSV).

Belongs to the cation transport ATPase (P-type) (TC 3.A.3) family. Type IB subfamily.

It localises to the cell membrane. It carries out the reaction Cu(2+)(in) + ATP + H2O = Cu(2+)(out) + ADP + phosphate + H(+). Functionally, involved in copper transport. The protein is Probable copper-transporting ATPase SynA (synA) of Synechococcus sp. (strain ATCC 27144 / PCC 6301 / SAUG 1402/1) (Anacystis nidulans).